Consider the following 350-residue polypeptide: C5a anaphylatoxin chemotactic receptor 1 (350 aa).

Residues 1 to 37 are Extracellular-facing; that stretch reads MDSFNYTTPDYGHYDDKDTLDPNTPVDKTSNTLRVPD. A required for CHIPS binding region spans residues 10 to 18; sequence DYGHYDDKD. Sulfotyrosine is present on residues Tyr11 and Tyr14. An involved in C5a binding region spans residues 21 to 30; sequence DPNTPVDKTS. A helical membrane pass occupies residues 38-64; sequence ILALVIFAVVFLVGVLGNALVVWVTAF. Over 65–69 the chain is Cytoplasmic; it reads EVKRT. Residues 70-93 form a helical membrane-spanning segment; sequence INAIWFLNLAVADFLSCLALPILF. At 94–110 the chain is on the extracellular side; sequence TSIVQHHHWPFGGAACR. Cys109 and Cys188 form a disulfide bridge. Residues 111–132 form a helical membrane-spanning segment; the sequence is ILPSLILLNMYASILLLATISA. At 133 to 153 the chain is on the cytoplasmic side; the sequence is DRFLLVFKPIWCQNFRGAGLA. Residues 154–174 form a helical membrane-spanning segment; the sequence is WIACAVAWGLALLLTIPSFLY. Over 175 to 200 the chain is Extracellular; sequence RVVREEYFPPKVLCGVDYSHDKQRER. The chain crosses the membrane as a helical span at residues 201–226; the sequence is AVAVVRLVLGFLWPLLTLTICYTFIL. Residues 227–242 lie on the Cytoplasmic side of the membrane; that stretch reads LRTWSRRATRSTKTLK. Residues 243-265 traverse the membrane as a helical segment; it reads VVVAVVASFFIFWLPYQVTGIMM. Topologically, residues 266–282 are extracellular; sequence SFLEPSSPTFLLLKKLD. The chain crosses the membrane as a helical span at residues 283–303; the sequence is SLCVSFAYINCCINPIIYVVA. The Cytoplasmic portion of the chain corresponds to 304–350; it reads GQGFQGRLRKSLPSLLRNVLTEESVVRESKSFTRSTVDTMAEKTQAV. A phosphoserine mark is found at Ser314, Ser317, Ser327, Ser332, Ser334, and Ser338.

The protein belongs to the G-protein coupled receptor 1 family. As to quaternary structure, homodimer. May also form higher-order oligomers. Interacts (when phosphorylated) with ARRB1 and ARRB2; the interaction is associated with internalization of C5aR. Interacts (via N-terminal domain) with S.aureus chemotaxis inhibitory protein (CHIPS); the interaction blocks the receptor and may thus inhibit the immune response. Post-translationally, sulfation plays a critical role in the association of C5aR with C5a, but no significant role in the ability of the receptor to transduce a signal and mobilize calcium in response to a small peptide agonist. Sulfation at Tyr-14 is important for CHIPS binding. Phosphorylated on serine residues in response to C5a binding, resulting in internalization of the receptor and short-term desensitization to C5a.

The protein resides in the cell membrane. Its subcellular location is the cytoplasmic vesicle. In terms of biological role, receptor for the chemotactic and inflammatory peptide anaphylatoxin C5a. The ligand interacts with at least two sites on the receptor: a high-affinity site on the extracellular N-terminus, and a second site in the transmembrane region which activates downstream signaling events. Receptor activation stimulates chemotaxis, granule enzyme release, intracellular calcium release and superoxide anion production. This chain is C5a anaphylatoxin chemotactic receptor 1 (C5AR1), found in Gorilla gorilla gorilla (Western lowland gorilla).